Here is a 775-residue protein sequence, read N- to C-terminus: Cation channel sperm-associated protein subunit epsilon-like protein (775 aa).

Positions methionine 1 to alanine 20 are cleaved as a signal peptide. N-linked (GlcNAc...) asparagine glycans are attached at residues asparagine 62 and asparagine 114.

Belongs to the CATSPERD family.

The sequence is that of Cation channel sperm-associated protein subunit epsilon-like protein from Mus musculus (Mouse).